We begin with the raw amino-acid sequence, 418 residues long: Tyrosine--tRNA ligase (418 aa).

Tyr34 lines the L-tyrosine pocket. Positions 39–48 (PTADSLHLGH) match the 'HIGH' region motif. Residues Tyr169 and Gln173 each contribute to the L-tyrosine site. A 'KMSKS' region motif is present at residues 229–233 (KFGKS). Lys232 is a binding site for ATP. The region spanning 352–410 (LNIVELLVTSGIVNSKRQAREDVQNGAIYVNGERVQDLDYTLSDSDKIDGELTVIRRGK) is the S4 RNA-binding domain.

The protein belongs to the class-I aminoacyl-tRNA synthetase family. TyrS type 1 subfamily. As to quaternary structure, homodimer.

It is found in the cytoplasm. It carries out the reaction tRNA(Tyr) + L-tyrosine + ATP = L-tyrosyl-tRNA(Tyr) + AMP + diphosphate + H(+). Functionally, catalyzes the attachment of tyrosine to tRNA(Tyr) in a two-step reaction: tyrosine is first activated by ATP to form Tyr-AMP and then transferred to the acceptor end of tRNA(Tyr). The chain is Tyrosine--tRNA ligase from Streptococcus suis (strain 98HAH33).